A 64-amino-acid chain; its full sequence is Large ribosomal subunit protein eL37 (64 aa).

The C4-type zinc-finger motif lies at 1–6 (GRCSAC). The Zn(2+) site is built by C3 and C6.

The protein belongs to the eukaryotic ribosomal protein eL37 family. Zn(2+) is required as a cofactor.

Binds to the 23S rRNA. This Solanum lycopersicum (Tomato) protein is Large ribosomal subunit protein eL37 (RPL37).